Reading from the N-terminus, the 282-residue chain is MIENRPIARVIAHLMLVLGIIIVAFPIYYTFIASSMTSNDIIRPPMSLLPGDHLSANYTEAMVGGVERVVGVSLERLLFNSFVVALAIAIGKIVISFLSAFAIVFFRFPFRMGFFWMIFITLMLPVEVRILPTYKVIVDLGLIDTYAGLTLPLMASATATFLFRQFFLTIPGELVEAARIDNAGPFRFMRDILLPLSRTNIAALFVILFIYGWTQYLWPLLVTNDAKMNTIIIGLKRMVDFTDASTPWNYVMVTAILAIIPPVMVVVLMQRWFVKGLVETEK.

Transmembrane regions (helical) follow at residues 14–34, 86–106, 112–132, 146–168, 201–221, and 248–268; these read LMLVLGIIIVAFPIYYTFIAS, LAIAIGKIVISFLSAFAIVFF, MGFFWMIFITLMLPVEVRILP, YAGLTLPLMASATATFLFRQFFL, IAALFVILFIYGWTQYLWPLL, and WNYVMVTAILAIIPPVMVVVL. One can recognise an ABC transmembrane type-1 domain in the interval 78–269; that stretch reads LFNSFVVALA…IPPVMVVVLM (192 aa).

It belongs to the binding-protein-dependent transport system permease family. As to quaternary structure, the complex is composed of two ATP-binding proteins (UgpC), two transmembrane proteins (UgpA and UgpE) and a solute-binding protein (UgpB).

It localises to the cell inner membrane. In terms of biological role, part of the ABC transporter complex UgpBAEC involved in sn-glycerol-3-phosphate (G3P) import. Probably responsible for the translocation of the substrate across the membrane. This Agrobacterium fabrum (strain C58 / ATCC 33970) (Agrobacterium tumefaciens (strain C58)) protein is sn-glycerol-3-phosphate transport system permease protein UgpE (ugpE).